Reading from the N-terminus, the 108-residue chain is UPF0145 protein SYNPCC7002_A1337 (108 aa).

Belongs to the UPF0145 family.

The polypeptide is UPF0145 protein SYNPCC7002_A1337 (Picosynechococcus sp. (strain ATCC 27264 / PCC 7002 / PR-6) (Agmenellum quadruplicatum)).